Here is a 295-residue protein sequence, read N- to C-terminus: MTASTPVAQTHIQSLPLLHSGKVRDIYAVDDERLLIVATDRLSAFDVILPDPIPDKGAVLTRVSNFWFRKTAHLAANHLLDTPPESVVAPEEADQVRDRGVVVRRLQALPVEAIVRGYLAGSGWQSYQRDGTVSGVALPDGLRQSDRLPEPIFTPTTKAAVGDHDEPISFAQTVERIGADLAERIRTIALEVFALATEYAESRGLIIADTKLEFGVTPEGEPVIIDELLTPDSSRFWPADAWQPGATPPAFDKQYIRDHLEALGWDKRPPAPHLTDDVIRQTAEKYREAERLLTR.

Belongs to the SAICAR synthetase family.

The enzyme catalyses 5-amino-1-(5-phospho-D-ribosyl)imidazole-4-carboxylate + L-aspartate + ATP = (2S)-2-[5-amino-1-(5-phospho-beta-D-ribosyl)imidazole-4-carboxamido]succinate + ADP + phosphate + 2 H(+). Its pathway is purine metabolism; IMP biosynthesis via de novo pathway; 5-amino-1-(5-phospho-D-ribosyl)imidazole-4-carboxamide from 5-amino-1-(5-phospho-D-ribosyl)imidazole-4-carboxylate: step 1/2. This chain is Phosphoribosylaminoimidazole-succinocarboxamide synthase, found in Halorhodospira halophila (strain DSM 244 / SL1) (Ectothiorhodospira halophila (strain DSM 244 / SL1)).